Here is a 203-residue protein sequence, read N- to C-terminus: Dephospho-CoA kinase (203 aa).

The DPCK domain occupies Lys-3–Asn-202. Gly-11–Thr-16 lines the ATP pocket.

This sequence belongs to the CoaE family.

It is found in the cytoplasm. The enzyme catalyses 3'-dephospho-CoA + ATP = ADP + CoA + H(+). Its pathway is cofactor biosynthesis; coenzyme A biosynthesis; CoA from (R)-pantothenate: step 5/5. Its function is as follows. Catalyzes the phosphorylation of the 3'-hydroxyl group of dephosphocoenzyme A to form coenzyme A. The sequence is that of Dephospho-CoA kinase from Rhizobium etli (strain ATCC 51251 / DSM 11541 / JCM 21823 / NBRC 15573 / CFN 42).